The following is a 174-amino-acid chain: SDLWVQKMKTYFNRIDFDKDGAITRMDFESMAERFAKESEMKAEHAKVLMDSLTGVWDNFLTAVAGGKGIDETTFINSMKEMVKNPEAKSVVEGPLPLFFRAVDTNEDNNISRDEYGIFFGMLGLDKTMAPASFDAIDTNNDGLLSLEEFVIAGSDFFMNDGDSTNKVFWGPLV.

N-acetylserine is present on S1. 4 EF-hand domains span residues 3–38 (LWVQ…FAKE), 55–90 (GVWD…EAKS), 91–126 (VVEG…LGLD), and 127–160 (KTMA…FFMN). The Ca(2+) site is built by D16, D18, D20, and D27. Ca(2+)-binding residues include D104, N106, D108, N110, E115, D138, N140, D142, and E149.

Functionally, like parvalbumins, SCPs seem to be more abundant in fast contracting muscles, but no functional relationship can be established from this distribution. The polypeptide is Sarcoplasmic calcium-binding protein (Hediste diversicolor (Sandworm)).